Consider the following 541-residue polypeptide: Arginine--tRNA ligase (541 aa).

Residues 119–129 (ANPTGPLHIGH) carry the 'HIGH' region motif.

It belongs to the class-I aminoacyl-tRNA synthetase family. As to quaternary structure, monomer.

The protein localises to the cytoplasm. The catalysed reaction is tRNA(Arg) + L-arginine + ATP = L-arginyl-tRNA(Arg) + AMP + diphosphate. This chain is Arginine--tRNA ligase, found in Helicobacter pylori (strain G27).